The sequence spans 244 residues: Large ribosomal subunit protein uL30A (244 aa).

A disordered region spans residues 1 to 26; it reads MAAEKILTPESQLKKSKAQQKTAEQV.

The protein belongs to the universal ribosomal protein uL30 family. In terms of assembly, component of the large ribosomal subunit (LSU). Mature yeast ribosomes consist of a small (40S) and a large (60S) subunit. The 40S small subunit contains 1 molecule of ribosomal RNA (18S rRNA) and 33 different proteins (encoded by 57 genes). The large 60S subunit contains 3 rRNA molecules (25S, 5.8S and 5S rRNA) and 46 different proteins (encoded by 81 genes).

It localises to the cytoplasm. Functionally, component of the ribosome, a large ribonucleoprotein complex responsible for the synthesis of proteins in the cell. The small ribosomal subunit (SSU) binds messenger RNAs (mRNAs) and translates the encoded message by selecting cognate aminoacyl-transfer RNA (tRNA) molecules. The large subunit (LSU) contains the ribosomal catalytic site termed the peptidyl transferase center (PTC), which catalyzes the formation of peptide bonds, thereby polymerizing the amino acids delivered by tRNAs into a polypeptide chain. The nascent polypeptides leave the ribosome through a tunnel in the LSU and interact with protein factors that function in enzymatic processing, targeting, and the membrane insertion of nascent chains at the exit of the ribosomal tunnel. This is Large ribosomal subunit protein uL30A from Saccharomyces cerevisiae (strain ATCC 204508 / S288c) (Baker's yeast).